Consider the following 1033-residue polypeptide: Isoleucine--tRNA ligase 2 (1033 aa).

The 'HIGH' region signature appears at 47–57 (PTANGLPHVGH). Residues 590–594 (KMSKS) carry the 'KMSKS' region motif. Lys-593 contributes to the ATP binding site.

It belongs to the class-I aminoacyl-tRNA synthetase family. IleS type 2 subfamily. Monomer. Zn(2+) serves as cofactor.

Its subcellular location is the cytoplasm. The catalysed reaction is tRNA(Ile) + L-isoleucine + ATP = L-isoleucyl-tRNA(Ile) + AMP + diphosphate. In terms of biological role, catalyzes the attachment of isoleucine to tRNA(Ile). As IleRS can inadvertently accommodate and process structurally similar amino acids such as valine, to avoid such errors it has two additional distinct tRNA(Ile)-dependent editing activities. One activity is designated as 'pretransfer' editing and involves the hydrolysis of activated Val-AMP. The other activity is designated 'posttransfer' editing and involves deacylation of mischarged Val-tRNA(Ile). This is Isoleucine--tRNA ligase 2 from Bacillus cereus (strain ZK / E33L).